The primary structure comprises 474 residues: ATP synthase subunit beta (474 aa).

151–158 is an ATP binding site; sequence GGAGVGKT.

Belongs to the ATPase alpha/beta chains family. F-type ATPases have 2 components, CF(1) - the catalytic core - and CF(0) - the membrane proton channel. CF(1) has five subunits: alpha(3), beta(3), gamma(1), delta(1), epsilon(1). CF(0) has three main subunits: a(1), b(2) and c(9-12). The alpha and beta chains form an alternating ring which encloses part of the gamma chain. CF(1) is attached to CF(0) by a central stalk formed by the gamma and epsilon chains, while a peripheral stalk is formed by the delta and b chains.

Its subcellular location is the cell inner membrane. The enzyme catalyses ATP + H2O + 4 H(+)(in) = ADP + phosphate + 5 H(+)(out). Its function is as follows. Produces ATP from ADP in the presence of a proton gradient across the membrane. The catalytic sites are hosted primarily by the beta subunits. This is ATP synthase subunit beta from Ruegeria sp. (strain TM1040) (Silicibacter sp.).